We begin with the raw amino-acid sequence, 398 residues long: MVCVPSSSSVMELANLISQSIPKLQDESPQRANDARGNVIEACSKMLALVTSPAEMLKEMVLINLASLQVINHYQIASVVPLNGHIPISELANKCGLPVDILRRILRQAMTYGAFSEPEPDCIAQTDVSREIPRLSPLLTYQLDVCLPSMVRLLDWLKDVDGEHACAYQIAHDTKDTWWSYASKRPELIENYGKYMALITSGGAHDVSYVLKGFAWEKLGNAVVVDVGGADGFVGISLAKEYPNLAVIVEDNLGLKDSADDNIPQHLKSRVVFLPHSFFKPQSALSRDADVFLLRHILHDWNDNDCRAILQALAASMKPGASILVAEQILQRPGAASWQRERVMRALDMQMMIQFGSKERAYEDWDALFKSVDPPLEIVDCVQPVGSADSFMELKRRA.

D251 is a binding site for S-adenosyl-L-methionine. The active-site Proton acceptor is the H299.

It belongs to the class I-like SAM-binding methyltransferase superfamily. Cation-independent O-methyltransferase family.

O-methyltransferase; part of the gene cluster that mediates the biosynthesis of a methylated derivative of known natural products orthosporin and diaporthin. Seems not to be involved in the biosynthesis of the identified final product of the pathway and its function has still to be determined. The protein is O-methyltransferase aoiO of Aspergillus oryzae (strain ATCC 42149 / RIB 40) (Yellow koji mold).